A 403-amino-acid polypeptide reads, in one-letter code: S-adenosylmethionine synthase (403 aa).

Residue His-15 participates in ATP binding. Asp-17 lines the Mg(2+) pocket. Residue Glu-43 coordinates K(+). Residues Glu-56 and Gln-99 each coordinate L-methionine. A flexible loop region spans residues 99-109; that stretch reads QSPHIAQGVDR. Residues 166-168, 232-233, Asp-241, 247-248, Ala-264, and Lys-268 contribute to the ATP site; these read DAK, KF, and RK. Asp-241 serves as a coordination point for L-methionine. Lys-272 contributes to the L-methionine binding site.

This sequence belongs to the AdoMet synthase family. In terms of assembly, homotetramer; dimer of dimers. Requires Mg(2+) as cofactor. K(+) is required as a cofactor.

Its subcellular location is the cytoplasm. The catalysed reaction is L-methionine + ATP + H2O = S-adenosyl-L-methionine + phosphate + diphosphate. The protein operates within amino-acid biosynthesis; S-adenosyl-L-methionine biosynthesis; S-adenosyl-L-methionine from L-methionine: step 1/1. Its function is as follows. Catalyzes the formation of S-adenosylmethionine (AdoMet) from methionine and ATP. The overall synthetic reaction is composed of two sequential steps, AdoMet formation and the subsequent tripolyphosphate hydrolysis which occurs prior to release of AdoMet from the enzyme. This is S-adenosylmethionine synthase from Stenotrophomonas maltophilia (strain K279a).